Consider the following 423-residue polypeptide: Deoxyguanosinetriphosphate triphosphohydrolase-like protein (423 aa).

The HD domain maps to 66–216; that stretch reads RLTHSLEVAQ…MDFSDDIAYS (151 aa).

The protein belongs to the dGTPase family. Type 2 subfamily.

The chain is Deoxyguanosinetriphosphate triphosphohydrolase-like protein from Corynebacterium diphtheriae (strain ATCC 700971 / NCTC 13129 / Biotype gravis).